The chain runs to 401 residues: Tryptophan synthase beta chain (401 aa).

K92 carries the post-translational modification N6-(pyridoxal phosphate)lysine.

Belongs to the TrpB family. Tetramer of two alpha and two beta chains. Requires pyridoxal 5'-phosphate as cofactor.

The enzyme catalyses (1S,2R)-1-C-(indol-3-yl)glycerol 3-phosphate + L-serine = D-glyceraldehyde 3-phosphate + L-tryptophan + H2O. Its pathway is amino-acid biosynthesis; L-tryptophan biosynthesis; L-tryptophan from chorismate: step 5/5. In terms of biological role, the beta subunit is responsible for the synthesis of L-tryptophan from indole and L-serine. The polypeptide is Tryptophan synthase beta chain (Vesicomyosocius okutanii subsp. Calyptogena okutanii (strain HA)).